A 528-amino-acid chain; its full sequence is GMP synthase [glutamine-hydrolyzing] (528 aa).

A Glutamine amidotransferase type-1 domain is found at 13–204 (AIVILDFGSQ…VYHVCGCDPD (192 aa)). Cys90 (nucleophile) is an active-site residue. Residues His178 and Glu180 contribute to the active site. The 199-residue stretch at 205–403 (WTTAAFIDEA…LGLPEEIVRR (199 aa)) folds into the GMPS ATP-PPase domain. Residue 232–238 (SGGVDSS) participates in ATP binding.

Homodimer.

It catalyses the reaction XMP + L-glutamine + ATP + H2O = GMP + L-glutamate + AMP + diphosphate + 2 H(+). Its pathway is purine metabolism; GMP biosynthesis; GMP from XMP (L-Gln route): step 1/1. Catalyzes the synthesis of GMP from XMP. The polypeptide is GMP synthase [glutamine-hydrolyzing] (Synechococcus sp. (strain CC9605)).